Here is a 1101-residue protein sequence, read N- to C-terminus: Leucine-rich repeat receptor-like serine/threonine-protein kinase At1g17230 (1101 aa).

Residues 1 to 23 form the signal peptide; the sequence is MRGRICFLAIVILCSFSFILVRS. Topologically, residues 24–734 are extracellular; it reads LNEEGRVLLE…WLINGSQRQK (711 aa). Asn-39, Asn-57, Asn-78, and Asn-97 each carry an N-linked (GlcNAc...) asparagine glycan. 26 LRR repeats span residues 66 to 90, 91 to 115, 117 to 137, 138 to 162, 163 to 186, 188 to 210, 211 to 234, 235 to 258, 260 to 282, 283 to 306, 308 to 329, 330 to 354, 355 to 379, 381 to 402, 403 to 426, 427 to 450, 451 to 474, 476 to 498, 499 to 522, 524 to 546, 548 to 569, 570 to 593, 595 to 618, 619 to 643, 644 to 667, and 669 to 692; these read LRTV…ICKL, HGLR…SLCR, LEVL…QLTM, IITL…IGNL, SSLQ…MAKL, QLRI…ISGC, ESLK…LEKL, QNLT…VGNI, RLEV…IGKL, TKMK…IGNL, DAAE…EFGH, ILNL…LGEL, TLLE…QFLP, LVDL…IGFY, SNFS…FCRF, QTLI…LKTC, KSLT…LFNL, NLTA…LGKL, KNLE…IGNL, KIVG…LGSC, TIQR…ELGQ, LVYL…SFGD, TRLM…LGKL, TSLQ…LGNL, QMLE…IGNL, and SLLI…VFQR. N-linked (GlcNAc...) asparagine glycosylation is found at Asn-161 and Asn-174. N-linked (GlcNAc...) asparagine glycosylation is found at Asn-236 and Asn-257. A glycan (N-linked (GlcNAc...) asparagine) is linked at Asn-368. N-linked (GlcNAc...) asparagine glycosylation is present at Asn-404. 5 N-linked (GlcNAc...) asparagine glycosylation sites follow: Asn-476, Asn-490, Asn-510, Asn-521, and Asn-529. 2 N-linked (GlcNAc...) asparagine glycosylation sites follow: Asn-626 and Asn-631. Asn-674 and Asn-728 each carry an N-linked (GlcNAc...) asparagine glycan. Residues 735–755 form a helical membrane-spanning segment; it reads ILTITCIVIGSVFLITFLGLC. Residues 756 to 1101 are Cytoplasmic-facing; sequence WTIKRREPAF…LEEANSSKEI (346 aa). Thr-788 and Thr-796 each carry phosphothreonine. A Protein kinase domain is found at 799–1081; it reads FSEDVVLGRG…ITEARGSSSL (283 aa). ATP-binding positions include 805–813 and Lys-827; that span reads LGRGACGTV. Phosphotyrosine is present on residues Tyr-874 and Tyr-913. Catalysis depends on Asp-926, which acts as the Proton acceptor. Ser-960 carries the phosphoserine modification. Phosphotyrosine occurs at positions 968 and 975. Position 976 is a phosphothreonine (Thr-976). The disordered stretch occupies residues 1076–1101; it reads RGSSSLSSSSITSETPLEEANSSKEI. Positions 1078-1088 are enriched in low complexity; that stretch reads SSSLSSSSITS.

The protein belongs to the protein kinase superfamily. Ser/Thr protein kinase family.

The protein localises to the cell membrane. The catalysed reaction is L-seryl-[protein] + ATP = O-phospho-L-seryl-[protein] + ADP + H(+). It catalyses the reaction L-threonyl-[protein] + ATP = O-phospho-L-threonyl-[protein] + ADP + H(+). This Arabidopsis thaliana (Mouse-ear cress) protein is Leucine-rich repeat receptor-like serine/threonine-protein kinase At1g17230.